We begin with the raw amino-acid sequence, 164 residues long: MAFKDNAVELEERVVAINRVTKVVKGGRNMRFAALVVVGDRNGRVGFGTGKSQEVPEAIRKAVEAAKKNLIEVPMVGTTIPHEVRSEFGGAKVLLKPAVEGAGVAAGGAVRAVVELAGVADVTSKSLGSNTPINIVRATVEGLKQLKRAEEVAALRGISVSDLA.

Residues 10–73 form the S5 DRBM domain; that stretch reads LEERVVAINR…EAAKKNLIEV (64 aa).

The protein belongs to the universal ribosomal protein uS5 family. As to quaternary structure, part of the 30S ribosomal subunit. Contacts proteins S4 and S8.

Functionally, with S4 and S12 plays an important role in translational accuracy. Its function is as follows. Located at the back of the 30S subunit body where it stabilizes the conformation of the head with respect to the body. This chain is Small ribosomal subunit protein uS5, found in Streptococcus thermophilus (strain CNRZ 1066).